The sequence spans 662 residues: FAST kinase domain-containing protein 3, mitochondrial (662 aa).

In terms of domain architecture, RAP spans 591–649 (IALCIDGPKRFCSNSKHLLGKEAIKQRHLQLLGYQVVQIPYHEIGMLKSRRELVEYLQR).

This sequence belongs to the FAST kinase family. As to expression, expression detected in spleen, thymus, testis, ovary, colon, heart, smooth muscle, kidney, brain, lung, liver and white adipose tissue with highest expression in liver and thyroid.

The protein resides in the mitochondrion. Functionally, required for normal mitochondrial respiration. Increases steady-state levels and half-lives of a subset of mature mitochondrial mRNAs MT-ND2, MT-ND3, MT-CYTB, MT-CO2, and MT-ATP8/6. Promotes MT-CO1 mRNA translation and increases mitochondrial complex IV assembly and activity. This Homo sapiens (Human) protein is FAST kinase domain-containing protein 3, mitochondrial (FASTKD3).